Reading from the N-terminus, the 20-residue chain is Octopamine receptor (20 aa).

It belongs to the G-protein coupled receptor 1 family.

The protein resides in the cell membrane. Functionally, putative receptor for octopamine. Octopamine (OA) is a neurotransmitter, neurohormone, and neuromodulator in invertebrates. The activity of this receptor is mediated by G proteins which activate adenylyl cyclase. In Photinus pyralis (Common eastern firefly), this protein is Octopamine receptor.